The following is a 152-amino-acid chain: Transcriptional regulator MraZ (152 aa).

SpoVT-AbrB domains follow at residues 5–52 (ATLV…PLPE) and 81–124 (ASEC…DEQT).

The protein belongs to the MraZ family. As to quaternary structure, forms oligomers.

It localises to the cytoplasm. The protein localises to the nucleoid. Its function is as follows. Negatively regulates its own expression and that of the subsequent genes in the proximal part of the division and cell wall (dcw) gene cluster. Acts by binding directly to DNA. May also regulate the expression of genes outside the dcw cluster. The sequence is that of Transcriptional regulator MraZ from Pectobacterium carotovorum subsp. carotovorum (strain PC1).